We begin with the raw amino-acid sequence, 576 residues long: Aspartate--tRNA ligase, cytoplasmic 1 (576 aa).

The disordered stretch occupies residues 1–78 (MSETTPVPVG…NWGELPMNQS (78 aa)). The span at 20-43 (LKKEQKKLEKEKKIAEAKAKKAAE) shows a compositional bias: basic and acidic residues. Glutamate 302 provides a ligand contact to L-aspartate. The tract at residues 324-327 (QLYK) is aspartate. Position 346 (arginine 346) interacts with L-aspartate. Residues 346–348 (RAE), 354–356 (RHL), and glutamate 499 each bind ATP. Residues serine 502 and arginine 506 each coordinate L-aspartate. 547–550 (GLER) contacts ATP.

It belongs to the class-II aminoacyl-tRNA synthetase family. Type 2 subfamily.

It localises to the cytoplasm. It carries out the reaction tRNA(Asp) + L-aspartate + ATP = L-aspartyl-tRNA(Asp) + AMP + diphosphate. The chain is Aspartate--tRNA ligase, cytoplasmic 1 (aspS1) from Dictyostelium discoideum (Social amoeba).